Consider the following 585-residue polypeptide: Pre-hexon-linking protein IIIa (585 aa).

The segment at 1 to 24 is disordered; that stretch reads MMQDATDPAVRAALQSQPSGLNST. Residues 1–106 form a peripentonal hexon-tethering domain region; the sequence is MMQDATDPAV…ALLQRVARYN (106 aa). Over residues 14–24 the composition is skewed to polar residues; the sequence is LQSQPSGLNST. The tract at residues 138–251 is binding to hexon-linking protein; sequence GSMVALNAFL…FTDSGSVSRD (114 aa). S225 is modified (phosphoserine; by host). T274 bears the Phosphothreonine; by host mark. Phosphoserine; by host occurs at positions 310, 444, 449, 450, 452, 469, and 473. Positions 438–475 are disordered; that stretch reads AALRKESFRRPSSLSDLGAAAPRSDASSPFPSLIGSFT. Over residues 462–475 the composition is skewed to polar residues; that stretch reads DASSPFPSLIGSFT. Position 490 is a phosphotyrosine; by host (Y490). Phosphoserine; by host is present on residues S494 and S515. The interval 528 to 573 is disordered; the sequence is QEHRDVPGPRPPTRRQRHDRQRGLVWEDDDSADDSSVLDLGGSGNP. A propeptide spanning residues 571 to 585 is cleaved from the precursor; the sequence is GNPFAHLRPRLGRMF.

Belongs to the adenoviridae hexon-linking protein IIIa family. In terms of assembly, interacts with hexon proteins; this interaction tethers the peripentonal hexons to hexons situated in the facet. Interacts with the penton protein (via N-terminus). Interacts with packaging protein 3; this interaction is required to promote correct genome packaging. Cleaved near the C-terminus by the viral protease during virion maturation to form the mature protein.

The protein resides in the virion. It is found in the host nucleus. In terms of biological role, structural component of the virion that acts as a cement protein on the capsid exterior which mediates the interactions between the hexons, including the peripentonal hexons, and reaches all the way to the penton vertices. Two hexon linking proteins IIIa, one from each facet, stabilize the unique edge interface between a pair of facets. As the virus enters the host cell, hexon linking proteins IIIa are shed concomitant with virion acidification in the endosome. During virus assembly, seems to play a role in the serotype specificity of the packaging of viral DNA via its interaction with packaging protein 3. The polypeptide is Pre-hexon-linking protein IIIa (Human adenovirus C serotype 2 (HAdV-2)).